The primary structure comprises 185 residues: Dioxygenase easH (185 aa).

The Fe cation site is built by His-17, Asp-19, and His-93.

It belongs to the PhyH family. In terms of assembly, homodimer. Fe cation serves as cofactor.

It participates in alkaloid biosynthesis; ergot alkaloid biosynthesis. Dioxygenase; part of the gene cluster that mediates the biosynthesis of fungal ergot alkaloid ergovaline, the predominant ergopeptine product in E.festucae var. lolii. DmaW catalyzes the first step of ergot alkaloid biosynthesis by condensing dimethylallyl diphosphate (DMAP) and tryptophan to form 4-dimethylallyl-L-tryptophan. The second step is catalyzed by the methyltransferase easF that methylates 4-dimethylallyl-L-tryptophan in the presence of S-adenosyl-L-methionine, resulting in the formation of 4-dimethylallyl-L-abrine. The catalase easC and the FAD-dependent oxidoreductase easE then transform 4-dimethylallyl-L-abrine to chanoclavine-I which is further oxidized by easD in the presence of NAD(+), resulting in the formation of chanoclavine-I aldehyde. Agroclavine dehydrogenase easG then mediates the conversion of chanoclavine-I aldehyde to agroclavine via a non-enzymatic adduct reaction: the substrate is an iminium intermediate that is formed spontaneously from chanoclavine-I aldehyde in the presence of glutathione. The presence of easA is not required to complete this reaction. Further conversion of agroclavine to paspalic acid is a two-step process involving oxidation of agroclavine to elymoclavine and of elymoclavine to paspalic acid, the second step being performed by the elymoclavine oxidase cloA. Paspalic acid is then further converted to D-lysergic acid. Ergovaline is assembled from D-lysergic acid and three different amino acids by the D-lysergyl-peptide-synthetase composed of a monomudular (lpsB) and a trimodular (lpsA) nonribosomal peptide synthetase subunit. This chain is Dioxygenase easH, found in Epichloe festucae var. lolii (Neotyphodium lolii).